Reading from the N-terminus, the 277-residue chain is Ribosomally synthesized cyclic peptide asperipin-2a precursor aprA (277 aa).

Positions 1–19 are cleaved as a signal peptide; sequence MHLSRYIAVLLSASSFVSA. 12 propeptides span residues 20 to 69, 76 to 88, 95 to 107, 114 to 126, 133 to 145, 152 to 164, 171 to 183, 190 to 202, 209 to 221, 228 to 240, 247 to 259, and 266 to 277; these read LPLQ…LDKR, KRNA…LDKR, and KRNAETPEDLDK.

In terms of processing, aprA is processed by kexin proteases to produce 11 identical copies of the hexapeptide Phe-Tyr-Tyr-Thr-Gly-Tyr, that is further modified aprY and aprR to yield asperipin-2a. The bicyclic structure of asperipin-2a is likely synthesized by the single ustYa family oxidase aprY. The reductase aprR may be required for the final reduction to yield asperipin-2a.

The protein operates within secondary metabolite biosynthesis. Ribosomally synthesized cyclic peptide asperipin-2a precursor; part of the gene cluster that mediates the biosynthesis of the asperipin-2a, a bicyclic peptide that possesses two macrocyclic ether rings consisting of 14- and 17-membered paracyclophans. The aprA translated product contains a 11-fold repeated peptide embedding the hexapeptide Phe-Tyr-Tyr-Thr-Gly-Tyr, that is converted into asperipin-2a. After being excised from the precursor peptide by kexin proteases, the core peptides are cyclized and modified post-translationally by enzymes encoded within the corresponding gene cluster. This chain is Ribosomally synthesized cyclic peptide asperipin-2a precursor aprA, found in Aspergillus flavus (strain ATCC 200026 / FGSC A1120 / IAM 13836 / NRRL 3357 / JCM 12722 / SRRC 167).